Here is a 518-residue protein sequence, read N- to C-terminus: Probable carboxypeptidase 2 (518 aa).

The signal sequence occupies residues methionine 1–alanine 21. Asparagine 46 is a glycosylation site (N-linked (GlcNAc...) asparagine). Residues proline 53–glutamate 76 are disordered. A Peptidase M14 domain is found at glycine 71–alanine 351. N-linked (GlcNAc...) asparagine glycosylation is present at asparagine 116. The Zn(2+) site is built by histidine 136, glutamate 139, and histidine 224. Glutamate 322 acts as the Proton donor/acceptor in catalysis. Asparagine 393 and asparagine 459 each carry an N-linked (GlcNAc...) asparagine glycan.

The protein belongs to the peptidase M14 family. Requires Zn(2+) as cofactor.

The protein resides in the secreted. Extracellular metalloprotease that contributes to pathogenicity. This is Probable carboxypeptidase 2 (MCPB) from Trichophyton verrucosum (strain HKI 0517).